A 51-amino-acid chain; its full sequence is uncharacterized protein (51 aa).

Residues 1–28 (MQQPQNITTSSISNNNNNNTSLTLQQQQ) form a disordered region. The stretch at 13-47 (SNNNNNNTSLTLQQQQEQLQQLQIKRKRNLMKQLQ) forms a coiled coil.

This is an uncharacterized protein from Dictyostelium discoideum (Social amoeba).